Here is a 446-residue protein sequence, read N- to C-terminus: Histidine--tRNA ligase (446 aa).

This sequence belongs to the class-II aminoacyl-tRNA synthetase family. Homodimer.

Its subcellular location is the cytoplasm. The enzyme catalyses tRNA(His) + L-histidine + ATP = L-histidyl-tRNA(His) + AMP + diphosphate + H(+). This is Histidine--tRNA ligase from Burkholderia cenocepacia (strain ATCC BAA-245 / DSM 16553 / LMG 16656 / NCTC 13227 / J2315 / CF5610) (Burkholderia cepacia (strain J2315)).